Here is a 988-residue protein sequence, read N- to C-terminus: Squamosa promoter-binding-like protein 16 (988 aa).

Positions 52 to 79 (GTPVDLTRPSKKVRSGSPGSGGGGGGNY) are disordered. A compositionally biased stretch (gly residues) spans 69–78 (PGSGGGGGGN). Residues 79 to 156 (YPKCQVDNCK…DGHNRRRRKT (78 aa)) form an SBP-type zinc finger. Residues cysteine 82, cysteine 87, cysteine 104, histidine 107, cysteine 123, cysteine 126, histidine 130, and cysteine 142 each contribute to the Zn(2+) site. Residues 139–155 (KRSCRRRLDGHNRRRRK) carry the Bipartite nuclear localization signal motif. Disordered regions lie at residues 240–262 (RKNP…SSPS) and 289–416 (GFGN…DTST). Composition is skewed to polar residues over residues 250–262 (NPQN…SSPS), 301–311 (LTSSDHSATTS), and 327–358 (RTSS…FTSS). The segment covering 368–379 (ASSTKYYSSASS) has biased composition (low complexity).

Zn(2+) serves as cofactor.

It localises to the nucleus. Trans-acting factor that binds specifically to the consensus nucleotide sequence 5'-TNCGTACAA-3'. The chain is Squamosa promoter-binding-like protein 16 (SPL16) from Arabidopsis thaliana (Mouse-ear cress).